A 462-amino-acid polypeptide reads, in one-letter code: Cysteine--tRNA ligase (462 aa).

Cys-27 contributes to the Zn(2+) binding site. A 'HIGH' region motif is present at residues Pro-29–Asn-39. 3 residues coordinate Zn(2+): Cys-211, His-236, and Glu-240. The 'KMSKS' region motif lies at Lys-270–Ser-274. Residue Lys-273 coordinates ATP.

The protein belongs to the class-I aminoacyl-tRNA synthetase family. Monomer. The cofactor is Zn(2+).

It is found in the cytoplasm. It catalyses the reaction tRNA(Cys) + L-cysteine + ATP = L-cysteinyl-tRNA(Cys) + AMP + diphosphate. In Anaplasma phagocytophilum (strain HZ), this protein is Cysteine--tRNA ligase.